The chain runs to 364 residues: Putative agmatine deiminase (364 aa).

Residue cysteine 355 is the Amidino-cysteine intermediate of the active site.

The protein belongs to the agmatine deiminase family.

The enzyme catalyses agmatine + H2O = N-carbamoylputrescine + NH4(+). The sequence is that of Putative agmatine deiminase from Mycoplasma mycoides subsp. mycoides SC (strain CCUG 32753 / NCTC 10114 / PG1).